The following is a 1016-amino-acid chain: Kinesin-like protein KIN-14K (1016 aa).

Residues 14 to 121 form the Calponin-homology (CH) domain; the sequence is ADRRAEVIEW…CLLVLRESVS (108 aa). Residues 123 to 176 are disordered; sequence GLRDGTSKAPLRKKWRVPETGEPLVPGVAQGKTSPGEDKRNGLPDPKSQQKTPI. Positions 288–354 form a coiled coil; the sequence is VNGTNEENQM…EVMTSMHEQQ (67 aa). One can recognise a Kinesin motor domain in the interval 481-808; that stretch reads NIRVYCRVRP…LKFAERVSGV (328 aa). 565–572 provides a ligand contact to ATP; that stretch reads GQTGSGKT. Residues 820 to 852 are a coiled coil; that stretch reads KDIKELLEQVASLKDTIVRKDTEIEQLQLMKDK. 2 stretches are compositionally biased toward polar residues: residues 884 to 893 and 990 to 1004; these read NQQSQLSDPQ and KTPN…QLIG. Disordered regions lie at residues 884–912 and 971–1016; these read NQQS…DITP and LTKN…RWQK.

Belongs to the TRAFAC class myosin-kinesin ATPase superfamily. Kinesin family. KIN-14 subfamily.

The sequence is that of Kinesin-like protein KIN-14K from Oryza sativa subsp. japonica (Rice).